The primary structure comprises 345 residues: Protease HtpX homolog (345 aa).

Transmembrane regions (helical) follow at residues T6–G26 and S27–N47. A Zn(2+)-binding site is contributed by H130. Residue E131 is part of the active site. Position 134 (H134) interacts with Zn(2+). The next 2 helical transmembrane spans lie at L145–G165 and I179–I199. E204 contacts Zn(2+).

It belongs to the peptidase M48B family. Zn(2+) is required as a cofactor.

Its subcellular location is the cell inner membrane. This chain is Protease HtpX homolog, found in Bartonella henselae (strain ATCC 49882 / DSM 28221 / CCUG 30454 / Houston 1) (Rochalimaea henselae).